Reading from the N-terminus, the 851-residue chain is Thrombospondin type-1 domain-containing protein 1 (851 aa).

An N-terminal signal peptide occupies residues 1–24; it reads MKPMLKDFSNLLLVVLCDYVLGEA. Residues 25 to 412 are Extracellular-facing; that stretch reads EYLLLQEPVH…SPQDPVKSNN (388 aa). Residues asparagine 53, asparagine 58, asparagine 69, asparagine 110, asparagine 135, and asparagine 304 are each glycosylated (N-linked (GlcNAc...) asparagine). One can recognise a TSP type-1 domain in the interval 339–392; sequence IETWGPWQPWSPCSTTCGDAVRERRRLCVTSFPSRPSCSGMSSETSPCSLEECA. 3 disulfide bridges follow: cysteine 351–cysteine 386, cysteine 355–cysteine 391, and cysteine 366–cysteine 376. The helical transmembrane segment at 413 to 433 threads the bilayer; it reads VVTVTGISLCLFIIFATVLIT. The Cytoplasmic segment spans residues 434-851; it reads LWRRFGRAPK…STLSVEKLVI (418 aa). A Phosphoserine modification is found at serine 462. Disordered stretches follow at residues 471-516, 626-646, and 682-777; these read SEPR…ESFQ, KSQI…HSRS, and SRMR…SSPI. Positions 685 to 695 are enriched in basic and acidic residues; it reads RTWDQMEDRCR. A compositionally biased stretch (polar residues) spans 765–776; sequence SHRSASRKQSSP.

As to quaternary structure, part of a complex composed of THSD1, PTK2/FAK1, TLN1 and VCL. Interacts with TLN1. Expressed in cerebral vascular endothelium.

The protein resides in the endosome membrane. The protein localises to the cell junction. It is found in the focal adhesion. Its function is as follows. Is a positive regulator of nascent focal adhesion assembly, involved in the modulation of endothelial cell attachment to the extracellular matrix. This is Thrombospondin type-1 domain-containing protein 1 (Thsd1) from Mus musculus (Mouse).